Here is a 662-residue protein sequence, read N- to C-terminus: Protein distal antenna (662 aa).

An HTH psq-type domain is found at 21–72 (TKGKRPLRHLTATDKIDAIQRIHDGESKASVARDIGVPESTLRGWCKNEEKL). Positions 48 to 68 (KASVARDIGVPESTLRGWCKN) form a DNA-binding region, H-T-H motif. Disordered regions lie at residues 265 to 299 (RNAR…STPS), 348 to 407 (YSQM…PEDT), 491 to 537 (PEDL…DDEV), and 558 to 596 (QSSP…KSTC). Low complexity predominate over residues 349-391 (SQMPRPSSPQQPQSTPPTTTTTQQQQPQSSTPPTATPPIVSTP). Polar residues predominate over residues 511–520 (FNPSPSTSIK). Acidic residues predominate over residues 527–536 (VDEDEDEDDE).

Homomers. Interacts with itself, danr, ey and dac to form a complex (or complexes) containing the RD factors.

The protein localises to the nucleus. Functionally, probable transcription factor with a role in the retinal determination (RD) network. Contributes to differentiation of antenna-specific characteristics. The sequence is that of Protein distal antenna from Culex quinquefasciatus (Southern house mosquito).